The chain runs to 807 residues: Mechanosensitive cation channel TMEM63A (807 aa).

Topologically, residues 1–51 are extracellular; sequence MTDSPFLELWQSRAVSVREQLGLGDRPNDSYCYNSAKNSTVLQGVTFGGIP. Asparagine 38 carries an N-linked (GlcNAc...) asparagine glycan. A helical membrane pass occupies residues 52-74; that stretch reads TVLLIDVSCFLFLILVFSIIRRR. Topologically, residues 75–134 are cytoplasmic; sequence FWDYGRIALVSEADSEPRFQRLSSTSSSGQQDFENELGCCPWLTAIFRLHDDQILEWCGE. The helical transmembrane segment at 135–167 threads the bilayer; sequence DAIHYLSFQRHIIFLLVVVSFLSLCVILPVNLS. The Extracellular portion of the chain corresponds to 168 to 191; that stretch reads GDLLDKDPYSFGRTTIANLQTDND. Residues 192–217 traverse the membrane as a helical segment; it reads LLWLHTIFAVIYLFLTVGFMRHHTQS. Residues 218 to 416 are Cytoplasmic-facing; sequence IKYKEENLVR…CWKNLSIQGL (199 aa). The interval 219-414 is intracellular linker IL2; confers mechanosensitivity; the sequence is KYKEENLVRR…DICWKNLSIQ (196 aa). Residues 417–444 form a helical membrane-spanning segment; the sequence is RWWLQWLGINFTLFLGLFFLTTPSIILS. Topologically, residues 445 to 462 are extracellular; the sequence is TMDKFNVTKPIHALNNPI. N-linked (GlcNAc...) asparagine glycosylation is present at asparagine 450. Residues 463–490 form a helical membrane-spanning segment; it reads ISQFFPTLLLWSFSALLPSIVYYSTLLE. Residues 491-495 lie on the Cytoplasmic side of the membrane; that stretch reads SHWTK. The chain crosses the membrane as a helical span at residues 496–532; that stretch reads SGENQIMMTKVYIFLIFMVLILPSLGLTSLDFFFRWL. Over 533–554 the chain is Extracellular; the sequence is FDKTSSEASIRLECVFLPDQGA. A helical transmembrane segment spans residues 555-586; that stretch reads FFVNYVIASAFIGNGMELLRLPGLILYTFRMI. The segment at 555–586 is gating helix; sequence FFVNYVIASAFIGNGMELLRLPGLILYTFRMI. The Cytoplasmic segment spans residues 587–606; sequence MAKTAADRRNVKQNQAFQYE. A helical transmembrane segment spans residues 607 to 624; sequence FGAMYAWMLCVFTVIMAY. The Extracellular portion of the chain corresponds to 625–628; sequence SITC. Residues 629–651 form a helical membrane-spanning segment; it reads PIIAPFGLIYILLKHMVDRHNLY. The Cytoplasmic portion of the chain corresponds to 652–661; the sequence is FIYLPAKLEK. Residues 662 to 689 form a helical membrane-spanning segment; it reads GIHFAAVNQALAAPILCLFWLYFFSFLR. Residues 690 to 694 lie on the Extracellular side of the membrane; the sequence is LGMKA. The chain crosses the membrane as a helical span at residues 695-709; it reads PATLFTFLVVLLTIL. At 710 to 807 the chain is on the cytoplasmic side; that stretch reads VCLAHTCFGY…GSVAAAPQEA (98 aa). Serine 739 is subject to Phosphoserine.

The protein belongs to the CSC1 (TC 1.A.17) family. As to quaternary structure, monomer. Post-translationally, N-Glycosylated.

It localises to the lysosome membrane. The protein resides in the early endosome membrane. The protein localises to the cell membrane. It catalyses the reaction Ca(2+)(in) = Ca(2+)(out). Its function is as follows. Mechanosensitive cation channel with low conductance and high activation threshold. In contrast to TMEM63B, does not show phospholipid scramblase activity. Acts as a regulator of lysosomal morphology by mediating lysosomal mechanosensitivity. Important for the baby's first breath and respiration throughout life. Upon lung inflation conducts cation currents in alveolar type 1 and 2 cells triggering lamellar body exocytosis and surfactant secretion into airspace. Also acts as an osmosensitive cation channel preferentially activated by hypotonic stress. This Pongo abelii (Sumatran orangutan) protein is Mechanosensitive cation channel TMEM63A (TMEM63A).